A 51-amino-acid polypeptide reads, in one-letter code: uncharacterized protein (51 aa).

A disordered region spans residues 1-28; the sequence is MQQPQNITTSSISNNNNNNTSLTLQQQQ. Residues 13 to 47 adopt a coiled-coil conformation; that stretch reads SNNNNNNTSLTLQQQQEQLQQLQIKRKRNLMKQLQ.

This is an uncharacterized protein from Dictyostelium discoideum (Social amoeba).